We begin with the raw amino-acid sequence, 123 residues long: NLLQFNKMILKETGKNAIPFYAFYGCYCGWGGRGKPKDKTDDRCCFVHDCCYGKLTGCPKWDIYPYSLKSGYITCGKGTWCEEQICECDRAAAICFRENLDTYNKYGYMFYPDSRCKGPSEQC.

7 disulfide bridges follow: Cys-26–Cys-116, Cys-28–Cys-45, Cys-44–Cys-95, Cys-50–Cys-123, Cys-51–Cys-88, Cys-58–Cys-81, and Cys-75–Cys-86. Ca(2+)-binding residues include Tyr-27, Gly-29, and Gly-31. His-48 is a catalytic residue. Asp-49 contributes to the Ca(2+) binding site. The active site involves Asp-89.

As to quaternary structure, monomer. It depends on Ca(2+) as a cofactor. As to expression, expressed by the venom gland.

The protein localises to the secreted. The catalysed reaction is a 1,2-diacyl-sn-glycero-3-phosphocholine + H2O = a 1-acyl-sn-glycero-3-phosphocholine + a fatty acid + H(+). P-bromophenacyl bromide (BPB) completely inhibits the catalytic and edematogenic activities. Enzymatic activity is also diminished by EDTA, heparin and crotapotins F2 and F3 from C.d.collilineatus. Inhibited by divalent cations different from calcium ions (cadmium, magnesium, manganese, zinc), since they act as competitive antagonists of this cofactor. In terms of biological role, snake venom phospholipase A2 (PLA2) that induces myotoxicity and local edema in mice. In addition, it causes neuromuscular blockade in avian neuromuscular preparations with a significant direct action on skeletal muscle function. Myotoxic action is exerted by both enzymatic and non-enzymatic mechanisms. PLA2 catalyzes the calcium-dependent hydrolysis of the 2-acyl groups in 3-sn-phosphoglycerides. In Bothrocophias hyoprora (Amazonian hognose viper), this protein is Basic myotoxic phospholipase A2 PhTX-II.